The chain runs to 862 residues: DNA mismatch repair protein MutS (862 aa).

Position 621 to 628 (621 to 628 (GPNMGGKS)) interacts with ATP.

This sequence belongs to the DNA mismatch repair MutS family.

This protein is involved in the repair of mismatches in DNA. It is possible that it carries out the mismatch recognition step. This protein has a weak ATPase activity. This Vibrio cholerae serotype O1 (strain ATCC 39541 / Classical Ogawa 395 / O395) protein is DNA mismatch repair protein MutS.